A 233-amino-acid chain; its full sequence is Ribose-5-phosphate isomerase A (233 aa).

Substrate is bound by residues 31–34 (SGST), 87–90 (DGAD), and 100–103 (KGGG). Glu-109 (proton acceptor) is an active-site residue. Lys-127 contributes to the substrate binding site.

The protein belongs to the ribose 5-phosphate isomerase family. As to quaternary structure, homodimer.

It carries out the reaction aldehydo-D-ribose 5-phosphate = D-ribulose 5-phosphate. Its pathway is carbohydrate degradation; pentose phosphate pathway; D-ribose 5-phosphate from D-ribulose 5-phosphate (non-oxidative stage): step 1/1. Its function is as follows. Catalyzes the reversible conversion of ribose-5-phosphate to ribulose 5-phosphate. This chain is Ribose-5-phosphate isomerase A, found in Chlamydia caviae (strain ATCC VR-813 / DSM 19441 / 03DC25 / GPIC) (Chlamydophila caviae).